We begin with the raw amino-acid sequence, 104 residues long: Thioredoxin (104 aa).

The 103-residue stretch at 2–104 (AIVKVTDSNF…NLAEVIEKHL (103 aa)) folds into the Thioredoxin domain. Cysteines 29 and 32 form a disulfide.

This sequence belongs to the thioredoxin family.

Functionally, component of the thioredoxin-thioredoxin reductase system. Participates in various redox reactions through the reversible oxidation of its active center dithiol to a disulfide and catalyzes dithiol-disulfide exchange reactions. The polypeptide is Thioredoxin (trxA) (Staphylococcus saprophyticus subsp. saprophyticus (strain ATCC 15305 / DSM 20229 / NCIMB 8711 / NCTC 7292 / S-41)).